Consider the following 362-residue polypeptide: Protein MGF 360-19R (362 aa).

An ANK repeat occupies 66 to 98; it reads LLNTALMKAVQDNNYELIKLFTEWGANINYGLI.

Belongs to the asfivirus MGF 360 family.

Its function is as follows. Plays a role in virus cell tropism, and may be required for efficient virus replication in macrophages. In Ornithodoros (relapsing fever ticks), this protein is Protein MGF 360-19R.